Reading from the N-terminus, the 504-residue chain is Glutamate--tRNA ligase (504 aa).

Residues 9–19 carry the 'HIGH' region motif; sequence PSPTGDPHVGT. The 'KMSKS' region signature appears at 248–252; the sequence is KISKR. An ATP-binding site is contributed by K251.

Belongs to the class-I aminoacyl-tRNA synthetase family. Glutamate--tRNA ligase type 1 subfamily. In terms of assembly, monomer.

The protein resides in the cytoplasm. It catalyses the reaction tRNA(Glu) + L-glutamate + ATP = L-glutamyl-tRNA(Glu) + AMP + diphosphate. Catalyzes the attachment of glutamate to tRNA(Glu) in a two-step reaction: glutamate is first activated by ATP to form Glu-AMP and then transferred to the acceptor end of tRNA(Glu). The polypeptide is Glutamate--tRNA ligase (Acidothermus cellulolyticus (strain ATCC 43068 / DSM 8971 / 11B)).